A 973-amino-acid chain; its full sequence is GATOR2 complex protein WDR59 (973 aa).

WD repeat units lie at residues glutamine 57–cysteine 98, glycine 103–valine 143, serine 146–glutamate 185, alanine 189–asparagine 229, proline 232–histidine 276, and glycine 280–cysteine 324. The interval aspartate 346–glutamate 365 is disordered. The segment covering proline 351–serine 360 has biased composition (polar residues). Positions glutamine 393–valine 494 constitute an RWD domain. The C4-type zinc finger occupies tyrosine 900 to threonine 920. Zn(2+) contacts are provided by cysteine 901, cysteine 904, cysteine 913, cysteine 916, cysteine 926, cysteine 937, histidine 942, histidine 945, histidine 948, cysteine 959, cysteine 963, cysteine 965, and cysteine 967. The RING-type; atypical zinc-finger motif lies at phenylalanine 921–glutamate 970.

Belongs to the WD repeat WDR59 family. In terms of assembly, component of the GATOR2 subcomplex, composed of MIOS, SEC13, SEH1L, WDR24 and WDR59. The GATOR2 complex interacts with CASTOR1 and CASTOR2; the interaction is negatively regulated by arginine. The GATOR2 complex interacts with SESN1, SESN2 and SESN3; the interaction is negatively regulated by amino acids. Interacts with DDB1-CUL4A/B E3 ligase complexes.

It is found in the lysosome membrane. With respect to regulation, the GATOR2 complex is negatively regulated by the upstream amino acid sensors CASTOR1 and SESN2, which sequester the GATOR2 complex in absence of amino acids. In the presence of abundant amino acids, GATOR2 is released from CASTOR1 and SESN2 and activated. Its function is as follows. As a component of the GATOR2 complex, functions as an activator of the amino acid-sensing branch of the mTORC1 signaling pathway. The GATOR2 complex indirectly activates mTORC1 through the inhibition of the GATOR1 subcomplex. GATOR2 probably acts as an E3 ubiquitin-protein ligase toward GATOR1. In the presence of abundant amino acids, the GATOR2 complex mediates ubiquitination of the NPRL2 core component of the GATOR1 complex, leading to GATOR1 inactivation. In the absence of amino acids, GATOR2 is inhibited, activating the GATOR1 complex. The polypeptide is GATOR2 complex protein WDR59 (Gallus gallus (Chicken)).